We begin with the raw amino-acid sequence, 404 residues long: Starvation-sensing protein RspA (404 aa).

It belongs to the mandelate racemase/muconate lactonizing enzyme family.

In terms of biological role, probably involved in the degradation of homoserine lactone (HSL) or of a metabolite of HSL that signals starvation. The protein is Starvation-sensing protein RspA of Escherichia coli (strain K12).